A 259-amino-acid chain; its full sequence is Imidazole glycerol phosphate synthase subunit HisF (259 aa).

Residues aspartate 11 and aspartate 130 contribute to the active site.

This sequence belongs to the HisA/HisF family. As to quaternary structure, heterodimer of HisH and HisF.

It localises to the cytoplasm. The catalysed reaction is 5-[(5-phospho-1-deoxy-D-ribulos-1-ylimino)methylamino]-1-(5-phospho-beta-D-ribosyl)imidazole-4-carboxamide + L-glutamine = D-erythro-1-(imidazol-4-yl)glycerol 3-phosphate + 5-amino-1-(5-phospho-beta-D-ribosyl)imidazole-4-carboxamide + L-glutamate + H(+). The protein operates within amino-acid biosynthesis; L-histidine biosynthesis; L-histidine from 5-phospho-alpha-D-ribose 1-diphosphate: step 5/9. IGPS catalyzes the conversion of PRFAR and glutamine to IGP, AICAR and glutamate. The HisF subunit catalyzes the cyclization activity that produces IGP and AICAR from PRFAR using the ammonia provided by the HisH subunit. This chain is Imidazole glycerol phosphate synthase subunit HisF, found in Syntrophobacter fumaroxidans (strain DSM 10017 / MPOB).